Consider the following 469-residue polypeptide: Sulfate adenylyltransferase subunit 1 (469 aa).

Residues 22-224 enclose the tr-type G domain; it reads KDLMRFITCG…NMTWYPGSPL (203 aa). The tract at residues 31 to 38 is G1; that stretch reads GSVDDGKS. Position 31-38 (31-38) interacts with GTP; that stretch reads GSVDDGKS. The G2 stretch occupies residues 89 to 93; sequence GITID. The segment at 110-113 is G3; sequence DTPG. GTP-binding positions include 110-114 and 165-168; these read DTPGH and NKMD. Residues 165–168 form a G4 region; it reads NKMD. The G5 stretch occupies residues 202–204; that stretch reads SAL.

This sequence belongs to the TRAFAC class translation factor GTPase superfamily. Classic translation factor GTPase family. CysN/NodQ subfamily. As to quaternary structure, heterodimer composed of CysD, the smaller subunit, and CysN.

It catalyses the reaction sulfate + ATP + H(+) = adenosine 5'-phosphosulfate + diphosphate. It functions in the pathway sulfur metabolism; hydrogen sulfide biosynthesis; sulfite from sulfate: step 1/3. Its function is as follows. With CysD forms the ATP sulfurylase (ATPS) that catalyzes the adenylation of sulfate producing adenosine 5'-phosphosulfate (APS) and diphosphate, the first enzymatic step in sulfur assimilation pathway. APS synthesis involves the formation of a high-energy phosphoric-sulfuric acid anhydride bond driven by GTP hydrolysis by CysN coupled to ATP hydrolysis by CysD. This chain is Sulfate adenylyltransferase subunit 1, found in Psychromonas ingrahamii (strain DSM 17664 / CCUG 51855 / 37).